The sequence spans 137 residues: Large ribosomal subunit protein uL16 (137 aa).

Basic residues predominate over residues 1–17; it reads MLSPKRVKFRKRQRGRL. Residues 1–24 form a disordered region; it reads MLSPKRVKFRKRQRGRLKGTDERG.

The protein belongs to the universal ribosomal protein uL16 family. Part of the 50S ribosomal subunit.

Functionally, binds 23S rRNA and is also seen to make contacts with the A and possibly P site tRNAs. The chain is Large ribosomal subunit protein uL16 from Leptospira borgpetersenii serovar Hardjo-bovis (strain JB197).